Here is a 362-residue protein sequence, read N- to C-terminus: Cytoskeleton protein RodZ (362 aa).

Residues 1 to 111 (MNTEASQDQT…LGKKHKKRDG (111 aa)) are Cytoplasmic-facing. An HTH cro/C1-type domain is found at 19–79 (LRQARESLGL…KLVHLPEDEL (61 aa)). Positions 30–49 (QQTVAERLCLKVSTIRDIEE) form a DNA-binding region, H-T-H motif. Residues 112–132 (WLMSFTWLIVLVVLGLTGAWW) traverse the membrane as a helical; Signal-anchor for type II membrane protein segment. At 133–362 (WQNHQAQQAE…RVARLTVGVE (230 aa)) the chain is on the periplasmic side. The interval 151–277 (SAQLSQNGGQ…LPTADAGVSG (127 aa)) is disordered. Residues 193–221 (STSAVTNSATTSSATTSSVPTTSSVPKTT) show a composition bias toward low complexity. The segment covering 223 to 242 (VPKTNSTEPVDTANTNTTMH) has biased composition (polar residues). The span at 246–259 (AASAAVSPSQVPQP) shows a compositional bias: low complexity.

This sequence belongs to the RodZ family.

Its subcellular location is the cell inner membrane. In terms of biological role, cytoskeletal protein that is involved in cell-shape control through regulation of the length of the long axis. This Yersinia pseudotuberculosis serotype IB (strain PB1/+) protein is Cytoskeleton protein RodZ.